A 78-amino-acid polypeptide reads, in one-letter code: MYFVADVKEKECAQYNCKQCVLFCPEPNCLNFKASTNSAWVWYDRCKGCEICVYVCSDLLKRHCIEMVMVTPKATAKS.

4Fe-4S ferredoxin-type domains are found at residues F3–S35 and N37–E66. [4Fe-4S] cluster is bound by residues C12, C17, C20, C24, C46, C49, C52, and C56.

Heterotetramer of one alpha, one beta, one delta and one gamma chain. The cofactor is [4Fe-4S] cluster.

In Aquifex aeolicus (strain VF5), this protein is Ferredoxin oxidoreductase 2 subunit ForD (forD2).